A 156-amino-acid chain; its full sequence is Myosin regulatory light chain, striated adductor muscle (156 aa).

A1 is subject to Blocked amino end (Ala). 2 consecutive EF-hand domains span residues 15-50 (KQIQEMKEAFSMLDVDRDGFVNKDDLKAISEQLGRT) and 84-119 (DSEETIRNAFAMFDELETKKLNIEYIKDLLENMGDN). Residues D28, D30, D32, and D39 each coordinate Ca(2+).

In molluscan muscle, calcium regulation is associated with myosin rather than with actin. Muscle myosin contains two types of light chains: the catalytic light chain, essential for ATPase activity, and the regulatory light chain, a calcium-binding protein responsible for Ca(2+) dependent binding and Ca(2+) dependent Mg-ATPase activity. The polypeptide is Myosin regulatory light chain, striated adductor muscle (Chlamys nipponensis akazara (Akazara scallop)).